The sequence spans 329 residues: Adenylate isopentenyltransferase 7, mitochondrial (329 aa).

The N-terminal 40 residues, 1-40, are a transit peptide targeting the mitochondrion; the sequence is MKFSISSLKQVQPILCFKNKLSKVNVNSFLHPKEKVIFVM. Position 41-48 (41-48) interacts with ATP; sequence GATGSGKS.

The protein belongs to the IPP transferase family. Expressed in both the vascular stele and the phloem companion cells of the root, in endodermis of the root elongation zone, trichomes on young leaves, and some pollen tubes.

It is found in the mitochondrion. It carries out the reaction dimethylallyl diphosphate + ADP = N(6)-(dimethylallyl)adenosine 5'-diphosphate + diphosphate. The enzyme catalyses dimethylallyl diphosphate + ATP = N(6)-(dimethylallyl)adenosine 5'-triphosphate + diphosphate. In terms of biological role, involved in cytokinin biosynthesis. Catalyzes the transfer of an isopentenyl group from dimethylallyl diphosphate (DMAPP) to ATP and ADP. This chain is Adenylate isopentenyltransferase 7, mitochondrial (IPT7), found in Arabidopsis thaliana (Mouse-ear cress).